Consider the following 669-residue polypeptide: JmjC domain-containing histone demethylation protein 1 (669 aa).

The tract at residues Met-1–Val-61 is disordered. 2 stretches are compositionally biased toward polar residues: residues Ala-16 to Ser-27 and His-36 to Gln-49. A PHD-type zinc finger spans residues Glu-65–Arg-126. Disordered regions lie at residues Phe-131 to Arg-150 and Pro-220 to His-256. Basic residues predominate over residues Lys-246–Thr-255. In terms of domain architecture, JmjC spans Val-332 to Glu-494. His-390 and Asp-392 together coordinate Fe cation. Lys-407 is a binding site for substrate. His-462 serves as a coordination point for Fe cation.

The protein belongs to the JHDM1 histone demethylase family. Fe(2+) serves as cofactor.

Its subcellular location is the nucleus. It catalyses the reaction N(6),N(6)-dimethyl-L-lysyl(36)-[histone H3] + 2 2-oxoglutarate + 2 O2 = L-lysyl(36)-[histone H3] + 2 formaldehyde + 2 succinate + 2 CO2. Functionally, histone demethylase that specifically demethylates 'Lys-36' of histone H3, thereby playing a central role in histone code. The protein is JmjC domain-containing histone demethylation protein 1 (JHD1) of Mycosarcoma maydis (Corn smut fungus).